The chain runs to 199 residues: Acireductone dioxygenase 2 (199 aa).

Fe(2+)-binding residues include His98, His100, Glu104, and His143. Ni(2+)-binding residues include His98, His100, Glu104, and His143.

It belongs to the acireductone dioxygenase (ARD) family. The cofactor is Fe(2+). Ni(2+) is required as a cofactor.

Its subcellular location is the cytoplasm. It localises to the nucleus. The catalysed reaction is 1,2-dihydroxy-5-(methylsulfanyl)pent-1-en-3-one + O2 = 4-methylsulfanyl-2-oxobutanoate + formate + 2 H(+). It carries out the reaction 1,2-dihydroxy-5-(methylsulfanyl)pent-1-en-3-one + O2 = 3-(methylsulfanyl)propanoate + CO + formate + 2 H(+). It participates in amino-acid biosynthesis; L-methionine biosynthesis via salvage pathway; L-methionine from S-methyl-5-thio-alpha-D-ribose 1-phosphate: step 5/6. Catalyzes 2 different reactions between oxygen and the acireductone 1,2-dihydroxy-3-keto-5-methylthiopentene (DHK-MTPene) depending upon the metal bound in the active site. Fe-containing acireductone dioxygenase (Fe-ARD) produces formate and 2-keto-4-methylthiobutyrate (KMTB), the alpha-ketoacid precursor of methionine in the methionine recycle pathway. Ni-containing acireductone dioxygenase (Ni-ARD) produces methylthiopropionate, carbon monoxide and formate, and does not lie on the methionine recycle pathway. In Vitis vinifera (Grape), this protein is Acireductone dioxygenase 2.